The chain runs to 352 residues: Tropomodulin-3 (352 aa).

A Phosphoserine modification is found at S25.

It belongs to the tropomodulin family. In terms of assembly, binds to the N-terminus of tropomyosin and to actin. Interacts with FLII. Ubiquitous.

It is found in the cytoplasm. The protein localises to the cytoskeleton. Its function is as follows. Blocks the elongation and depolymerization of the actin filaments at the pointed end. The Tmod/TM complex contributes to the formation of the short actin protofilament, which in turn defines the geometry of the membrane skeleton. This Homo sapiens (Human) protein is Tropomodulin-3 (TMOD3).